The sequence spans 275 residues: Diaminopimelate epimerase (275 aa).

Substrate-binding residues include Asn12, Gln45, and Asn65. Cys74 serves as the catalytic Proton donor. Residues 75–76 (GN), Asn158, Asn191, and 209–210 (ER) each bind substrate. The Proton acceptor role is filled by Cys218. 219-220 (GS) lines the substrate pocket.

The protein belongs to the diaminopimelate epimerase family. As to quaternary structure, homodimer.

It is found in the cytoplasm. It catalyses the reaction (2S,6S)-2,6-diaminopimelate = meso-2,6-diaminopimelate. It functions in the pathway amino-acid biosynthesis; L-lysine biosynthesis via DAP pathway; DL-2,6-diaminopimelate from LL-2,6-diaminopimelate: step 1/1. In terms of biological role, catalyzes the stereoinversion of LL-2,6-diaminopimelate (L,L-DAP) to meso-diaminopimelate (meso-DAP), a precursor of L-lysine and an essential component of the bacterial peptidoglycan. This is Diaminopimelate epimerase from Shewanella amazonensis (strain ATCC BAA-1098 / SB2B).